The following is a 663-amino-acid chain: COBRA-like protein 9 (663 aa).

The first 23 residues, 1-23 (MGVLLPIFFGVLLLFTVTPPSMS), serve as a signal peptide directing secretion. Asn-63, Asn-111, Asn-121, Asn-169, Asn-203, Asn-326, Asn-355, Asn-397, Asn-409, Asn-429, Asn-470, Asn-550, and Asn-561 each carry an N-linked (GlcNAc...) asparagine glycan. A lipid anchor (GPI-anchor amidated serine) is attached at Ser-638. Residues 639–663 (GGRRNGAITVLSFITFYVAAFMVLL) constitute a propeptide, removed in mature form.

This sequence belongs to the COBRA family. In terms of tissue distribution, expressed only in flowers.

It is found in the cell membrane. The polypeptide is COBRA-like protein 9 (COBL9) (Arabidopsis thaliana (Mouse-ear cress)).